We begin with the raw amino-acid sequence, 171 residues long: ATP synthase subunit b (171 aa).

Residues 12-34 (FALNLNLFETNVINLAVVAFGLY) form a helical membrane-spanning segment.

Belongs to the ATPase B chain family. As to quaternary structure, F-type ATPases have 2 components, F(1) - the catalytic core - and F(0) - the membrane proton channel. F(1) has five subunits: alpha(3), beta(3), gamma(1), delta(1), epsilon(1). F(0) has four main subunits: a(1), b(1), b'(1) and c(10-14). The alpha and beta chains form an alternating ring which encloses part of the gamma chain. F(1) is attached to F(0) by a central stalk formed by the gamma and epsilon chains, while a peripheral stalk is formed by the delta, b and b' chains.

The protein resides in the cellular thylakoid membrane. Functionally, f(1)F(0) ATP synthase produces ATP from ADP in the presence of a proton or sodium gradient. F-type ATPases consist of two structural domains, F(1) containing the extramembraneous catalytic core and F(0) containing the membrane proton channel, linked together by a central stalk and a peripheral stalk. During catalysis, ATP synthesis in the catalytic domain of F(1) is coupled via a rotary mechanism of the central stalk subunits to proton translocation. Its function is as follows. Component of the F(0) channel, it forms part of the peripheral stalk, linking F(1) to F(0). The polypeptide is ATP synthase subunit b (Prochlorococcus marinus (strain SARG / CCMP1375 / SS120)).